Here is a 317-residue protein sequence, read N- to C-terminus: Aspartate carbamoyltransferase catalytic subunit (317 aa).

Carbamoyl phosphate is bound by residues Arg66 and Thr67. L-aspartate is bound at residue Lys94. Positions 116, 144, and 147 each coordinate carbamoyl phosphate. Arg177 and Arg231 together coordinate L-aspartate. Carbamoyl phosphate-binding residues include Gly272 and Pro273.

Belongs to the aspartate/ornithine carbamoyltransferase superfamily. ATCase family. In terms of assembly, heterododecamer (2C3:3R2) of six catalytic PyrB chains organized as two trimers (C3), and six regulatory PyrI chains organized as three dimers (R2).

It carries out the reaction carbamoyl phosphate + L-aspartate = N-carbamoyl-L-aspartate + phosphate + H(+). It participates in pyrimidine metabolism; UMP biosynthesis via de novo pathway; (S)-dihydroorotate from bicarbonate: step 2/3. Catalyzes the condensation of carbamoyl phosphate and aspartate to form carbamoyl aspartate and inorganic phosphate, the committed step in the de novo pyrimidine nucleotide biosynthesis pathway. In Rhodopseudomonas palustris (strain HaA2), this protein is Aspartate carbamoyltransferase catalytic subunit.